The sequence spans 327 residues: Peroxidase 21 (327 aa).

The signal sequence occupies residues 1-28 (MANAKPFCLLGFFCLLLQLFSIFHIGNG). 4 disulfide bridges follow: C39–C118, C72–C77, C124–C323, and C204–C231. The active-site Proton acceptor is the H70. D71, V74, D78, and S80 together coordinate Ca(2+). P167 provides a ligand contact to substrate. The N-linked (GlcNAc...) asparagine glycan is linked to N170. H197 contributes to the heme b binding site. S198 contacts Ca(2+). The Ca(2+) site is built by D247, T250, and D255.

It belongs to the peroxidase family. Classical plant (class III) peroxidase subfamily. Requires heme b as cofactor. It depends on Ca(2+) as a cofactor. As to expression, preferentially expressed in roots and leaves, slightly in stems.

It catalyses the reaction 2 a phenolic donor + H2O2 = 2 a phenolic radical donor + 2 H2O. Functionally, removal of H(2)O(2), oxidation of toxic reductants, biosynthesis and degradation of lignin, suberization, auxin catabolism, response to environmental stresses such as wounding, pathogen attack and oxidative stress. These functions might be dependent on each isozyme/isoform in each plant tissue. In terms of biological role, might function as heat shock-like defense protein. May be implicated in the systemic acquired resistance response. The protein is Peroxidase 21 (PER21) of Arabidopsis thaliana (Mouse-ear cress).